The following is a 456-amino-acid chain: GTPase Der (456 aa).

2 EngA-type G domains span residues 3 to 167 (FTIA…PPSD) and 185 to 360 (IRVA…AVWN). GTP contacts are provided by residues 9–16 (GRPNVGKS), 56–60 (DTAGL), and 119–122 (NKSE). The disordered stretch occupies residues 162-181 (IVPPSDDEDDEREETDEERA). A compositionally biased stretch (acidic residues) spans 166 to 178 (SDDEDDEREETDE). GTP is bound by residues 191–198 (GRPNAGKS), 238–242 (DTAGL), and 303–306 (NKWD). In terms of domain architecture, KH-like spans 361-445 (RRVPTAALNR…PVRITLREKA (85 aa)).

Belongs to the TRAFAC class TrmE-Era-EngA-EngB-Septin-like GTPase superfamily. EngA (Der) GTPase family. In terms of assembly, associates with the 50S ribosomal subunit.

Its function is as follows. GTPase that plays an essential role in the late steps of ribosome biogenesis. This is GTPase Der from Bradyrhizobium sp. (strain ORS 278).